The chain runs to 676 residues: WD repeat-containing protein 48 (676 aa).

Tyrosine 28 is subject to Phosphotyrosine. WD repeat units lie at residues tyrosine 28–tyrosine 67, histidine 73–threonine 112, threonine 115–alanine 154, glycine 166–lysine 205, glycine 208–threonine 247, valine 250–leucine 289, glutamate 292–alanine 334, and lysine 358–aspartate 397. The residue at position 214 (lysine 214) is an N6-acetyllysine. Position 578 is an N6-acetyllysine (lysine 578). The tract at residues leucine 607 to glutamate 628 is disordered. Over residues asparagine 609–asparagine 619 the composition is skewed to low complexity. A Phosphothreonine modification is found at threonine 613.

Belongs to the WD repeat WDR48 family. Interacts with USP46. Interacts with USP1. Interacts with USP12. Component of the USP12-WDR20-WDR48 deubiquitinating complex. Component of the USP12-DMWD-WDR48 deubiquitinating complex. Interacts with PHLPP1. Interacts with RAD51AP1; the interaction is direct and promotes formation of a trimeric complex with RAD51 via RAD51AP1. Interacts with ATAD5; the interaction regulates USP1-mediated PCNA deubiquitination. Interacts with RAD51; the interaction is enhanced under replication stress. Interacts with ITCH; the interaction is more efficient when both USP12 and WDR48/UAF1 are involved and may facilitate recruitment of the USP12 deubiquitinating complex to Notch.

The protein resides in the nucleus. Its subcellular location is the cytoplasm. It localises to the lysosome. It is found in the late endosome. In terms of biological role, regulator of deubiquitinating complexes, which acts as a strong activator of USP1, USP12 and USP46. Enhances the USP1-mediated deubiquitination of FANCD2; USP1 being almost inactive by itself. Activates deubiquitination by increasing the catalytic turnover without increasing the affinity of deubiquitinating enzymes for the substrate. Also activates deubiquitinating activity of complexes containing USP12. Docks at the distal end of the USP12 fingers domain and induces a cascade of structural changes leading to the activation of the enzyme. Together with RAD51AP1, promotes DNA repair by stimulating RAD51-mediated homologous recombination. Binds single-stranded DNA (ssDNA) and double-stranded DNA (dsDNA). DNA-binding is required both for USP1-mediated deubiquitination of FANCD2 and stimulation of RAD51-mediated homologous recombination: both WDR48/UAF1 and RAD51AP1 have coordinated role in DNA-binding during these processes. Together with ATAD5 and by regulating USP1 activity, has a role in PCNA-mediated translesion synthesis (TLS) by deubiquitinating monoubiquitinated PCNA. Together with ATAD5, has a role in recruiting RAD51 to stalled forks during replication stress. The polypeptide is WD repeat-containing protein 48 (Wdr48) (Mus musculus (Mouse)).